The sequence spans 552 residues: (R)-mandelonitrile lyase-like (552 aa).

A signal peptide spans methionine 1–alanine 28. The N-linked (GlcNAc...) asparagine glycan is linked to asparagine 44. Aspartate 55 to glutamate 82 lines the FAD pocket. Asparagine 162, asparagine 259, and asparagine 434 each carry an N-linked (GlcNAc...) asparagine glycan. Histidine 492 acts as the Proton acceptor in catalysis.

The protein belongs to the GMC oxidoreductase family. Monomer. The cofactor is FAD. Glycosylated.

The catalysed reaction is (R)-mandelonitrile = benzaldehyde + hydrogen cyanide. This chain is (R)-mandelonitrile lyase-like, found in Arabidopsis thaliana (Mouse-ear cress).